Here is a 178-residue protein sequence, read N- to C-terminus: Ribosome maturation factor RimM (178 aa).

One can recognise a PRC barrel domain in the interval 100 to 178 (DEGEFYWHQL…EIRVDWDADF (79 aa)).

The protein belongs to the RimM family. As to quaternary structure, binds ribosomal protein uS19.

Its subcellular location is the cytoplasm. In terms of biological role, an accessory protein needed during the final step in the assembly of 30S ribosomal subunit, possibly for assembly of the head region. Essential for efficient processing of 16S rRNA. May be needed both before and after RbfA during the maturation of 16S rRNA. It has affinity for free ribosomal 30S subunits but not for 70S ribosomes. This Azotobacter vinelandii (strain DJ / ATCC BAA-1303) protein is Ribosome maturation factor RimM.